We begin with the raw amino-acid sequence, 510 residues long: Hydroperoxide bicyclase CYP5164A3, mitochondrial (510 aa).

A mitochondrion-targeting transit peptide spans 1-31; sequence MQRVGAASPTCSSLQAPAAAPPILTISPHHR. Heme is bound at residue Cys-452.

It belongs to the cytochrome P450 family. Heme serves as cofactor.

Its subcellular location is the mitochondrion. The enzyme catalyses (13S)-hydroperoxy-(9Z,11E,15Z)-octadecatrienoate = plasmodiophorol A. It carries out the reaction (13S)-hydroperoxy-(9Z,11E,15Z)-octadecatrienoate = plasmodiophorol B. It catalyses the reaction (13S)-hydroperoxy-(9Z,11E,15Z)-octadecatrienoate = ectocarpin A + H2O. The catalysed reaction is (15S)-hydroperoxy-(5Z,8Z,11Z,13E,17Z)-eicosapentaenoate = ectocarpin B + H2O. The enzyme catalyses (15S)-hydroperoxy-(5Z,8Z,11Z,13E,17Z)-eicosapentaenoate = ectocarpin C. It carries out the reaction (15S)-hydroperoxy-(5Z,8Z,11Z,13E,17Z)-eicosapentaenoate + H2O = ectocarpin D. It catalyses the reaction (15S)-hydroperoxy-(5Z,8Z,11Z,13E,17Z)-eicosapentaenoate = 14-oxo-15-hydroxy-(5Z,8Z,11Z,17Z)-eicosatetraenoate. Its pathway is lipid metabolism; oxylipin biosynthesis. Cytochrome P450 hydroperoxide bicyclase involved in the metabolism of oxylipins 'ectocarpins' natural products, such as hybridalactone, ecklonilactones and derivatives. Isomerizes the hydroperoxides into epoxyalcohols via epoxyallylic radical. Can use alpha-linolenic acid 13(S)-hydroperoxide (13-HPOTE) and eicosapentaenoic acid 15(S)-hydroperoxide (15-HPEPE) as preferred substrate to produce corresponding heterobicyclic oxylipins, such as plasmodiophorol A (6-oxabicyclo[3.1.0]hexane), plasmodiophorol B (2-oxabicyclo[2.2.1]heptane) and plasmodiophorol C (4-hydroxymethyl-1,2-dihydroxycyclopentane) as well as ectocarpin A (3-propenyl-6-oxabicyclo[3.1.0]hexane) formed at about 15:3:3:1 ratio for 13-HPOTE, and analogous to plasmodiophorols A and B including ectocarpin B (3-[(1'E)-propenyl]-6-oxabicyclo[3.1.0]hexane), ectocarpin C, 14-oxo-15-hydroxy-5,8,11,17-eicosate-traenoic acid and ectocarpin D for 15-HPEPE. Barely able to use linoleic acid 13-hydroperoxide (13-HPODE), linoleic acid 9-hydroperoxide (9-HPODE), eicosapentaenoic acid 15-hydroperoxide (15-HPEPE), and alpha-linolenic acid 9-hydroperoxide (9-HPOTE) as substrates. The sequence is that of Hydroperoxide bicyclase CYP5164A3, mitochondrial from Ectocarpus siliculosus (Brown alga).